We begin with the raw amino-acid sequence, 594 residues long: Phostensin (594 aa).

Composition is skewed to basic and acidic residues over residues 18 to 33 (EEAA…RDRL) and 109 to 125 (VLGD…ERRS). Disordered regions lie at residues 18 to 238 (EEAA…PTDV) and 294 to 485 (VQDI…GKKR). Phosphoserine is present on residues serine 126, serine 134, serine 174, and serine 194. 2 stretches are compositionally biased toward basic and acidic residues: residues 133–155 (QSPK…DRRL) and 167–190 (SLRD…EAQK). Threonine 198 bears the Phosphothreonine mark. Phosphoserine is present on serine 224. Over residues 353–364 (EAEEEAEKEEAE) the composition is skewed to acidic residues. Positions 403–421 (PRPPTPAPLSPPPSAPTAP) are enriched in pro residues. Serine 412 carries the phosphoserine modification. Residue lysine 437 is modified to N6-acetyllysine. The residue at position 510 (serine 510) is a Phosphoserine. Residues 531–577 (YQYPSESSVLEDLGPEPETPIAPLATQPDEEEEEEEEEEELLLQPGL) form a disordered region. Residues 558-571 (PDEEEEEEEEEEEL) are compositionally biased toward acidic residues.

Interacts with Protein phosphatase 1 (PP1).

The protein resides in the cytoplasm. The protein localises to the cytoskeleton. May target protein phosphatase 1 to F-actin cytoskeleton. This Mus musculus (Mouse) protein is Phostensin (Ppp1r18).